The sequence spans 307 residues: Manganese-dependent inorganic pyrophosphatase (307 aa).

Positions 7, 11, 13, 66, 88, and 147 each coordinate Mn(2+).

Requires Mn(2+) as cofactor.

Its subcellular location is the cytoplasm. The catalysed reaction is diphosphate + H2O = 2 phosphate + H(+). This chain is Manganese-dependent inorganic pyrophosphatase (ppaC), found in Methanocaldococcus jannaschii (strain ATCC 43067 / DSM 2661 / JAL-1 / JCM 10045 / NBRC 100440) (Methanococcus jannaschii).